The following is a 149-amino-acid chain: Probable flagellum biosynthesis repressor protein FlbT (149 aa).

It belongs to the FlbT family.

Has a post-transcriptional repressor function in flagellum biogenesis. Associates with the 5'-UTR of fljK mRNA and promotes its degradation. The sequence is that of Probable flagellum biosynthesis repressor protein FlbT from Rhizobium etli (strain CIAT 652).